A 371-amino-acid chain; its full sequence is N-acetyldiaminopimelate deacetylase (371 aa).

Aspartate 68 is an active-site residue. Glutamate 127 serves as the catalytic Proton acceptor.

Belongs to the peptidase M20A family. N-acetyldiaminopimelate deacetylase subfamily.

It catalyses the reaction N-acetyl-(2S,6S)-2,6-diaminopimelate + H2O = (2S,6S)-2,6-diaminopimelate + acetate. The protein operates within amino-acid biosynthesis; L-lysine biosynthesis via DAP pathway; LL-2,6-diaminopimelate from (S)-tetrahydrodipicolinate (acetylase route): step 3/3. Its function is as follows. Catalyzes the conversion of N-acetyl-diaminopimelate to diaminopimelate and acetate. The sequence is that of N-acetyldiaminopimelate deacetylase from Halalkalibacterium halodurans (strain ATCC BAA-125 / DSM 18197 / FERM 7344 / JCM 9153 / C-125) (Bacillus halodurans).